Reading from the N-terminus, the 962-residue chain is MREESWEEHDTIQLTAQRKYLAEVQALETLLTRELSVFLTEPGSKKTNIINRITGKTYALPSTELLRLYEHLEQCRKQGALMYFLERQGTYSGLMLDYDLKLNTNAAPPLESPALSRLCHRIFMHIKNTSVLPEGSHKIHFFFTLKPEVVQGKYGFHVLIPGLKLAASTKKSIIASLQHDATVQKILHEQGVTNPESCLDPHSASVPSLLYGSSKLNHKPYQLKTGFELVFDSSDPDYIPIHQIKNIEAYNLVSELSLTNEQGSLVKPVYCEADIAAEKEEEIPVDDHSLSILMLHDPEARYLHKILNLLPPEYYVEYPLWSNVVFALANTSANYRPLAEWFSQKCPEKWNTGGKEKLEKLWNDASRHTEKKITKRSIMYWAHKHAPQQYKEIVEQGYFSILAEYVYSYNGTLEHYMIAKVIYAMMGNKFVVDVDSNGKYVWFEFVLPGQPMNQGEIWKWRKEVNPDELHIYISENFSRVMDRITEHIKYHLSQPHETNILNYYKKLLKAFERSKSKIFNDSFKKGVIRQAEFLFRQRSFIQTLDTNPHLLGVGNGVLSIETIPAKLINHFHEHPIHQYTHICYEPFNPENPWTKLLLNALQDIIPELDARLWIMFYLSTAIFRGLKEALMLLWLGGGCNGKTFLMRLVAMVLGDHYASKLNISLLTSCRETAEKPNSAFMRLKGRGYGYFEETNKSEVLNTSRLKEMVNPGDVTARELNQKQESFQMTATMVAASNYNFIIDTTDHGTWRRLRHYRSKVKFCHNPDPNNSYEKKEDPRFIHEYIMDPNCQNAFFSILVYFWEKLQKEYNGQIKKVFCPTIESETEAYRKSQDTLHRFITERVVESPSAETVYNLSEVVTAYAEWYNTNINVKRHIALELSQELENSVLEKYLQWSPNKTRILKGCRILHKFETLQPGESYIGVSTAGTLLNTPICEPKNKWWEWSPNPSAPPEKEASAPTP.

In terms of domain architecture, SF3 helicase spans 607–775; that stretch reads ELDARLWIMF…PDPNNSYEKK (169 aa). 636-643 is an ATP binding site; the sequence is GGGCNGKT.

It belongs to the asfivirus helicase C962R family.

The protein is Putative primase C962R of Ornithodoros (relapsing fever ticks).